An 80-amino-acid chain; its full sequence is Small ribosomal subunit protein bS16c (80 aa).

This sequence belongs to the bacterial ribosomal protein bS16 family.

It is found in the plastid. Its subcellular location is the chloroplast. In Lotus japonicus (Lotus corniculatus var. japonicus), this protein is Small ribosomal subunit protein bS16c.